The chain runs to 528 residues: Cytochrome P450 monooxygenase vrcB (528 aa).

Residues 5–27 (YGLFFAAVALYSVALVIYRLYLH) traverse the membrane as a helical segment. Cysteine 470 contacts heme.

It belongs to the cytochrome P450 family. The cofactor is heme.

The protein localises to the membrane. It carries out the reaction variecoladiene + 4 reduced [NADPH--hemoprotein reductase] + 4 O2 = variecolin + 4 oxidized [NADPH--hemoprotein reductase] + 6 H2O + 4 H(+). It functions in the pathway secondary metabolite biosynthesis; terpenoid biosynthesis. Its function is as follows. Cytochrome P450 monooxygenase; part of the gene cluster that mediates the biosynthesis of the sesterterpene variecolin. The first step in the pathway is performed by the variecoladiene synthase vrcA that possesses both prenyl transferase and terpene cyclase activity, converting isopentenyl diphosphate and dimethylallyl diphosphate into geranylfarnesyl pyrophosphate (GFPP) and then converting GFPP into the tetracyclic variecoladiene. The cytochrome P450 monooxygenase vrcB then catalyzes multiple oxidations at C-5 and C-20 positions to yield variecolin. The sequence is that of Cytochrome P450 monooxygenase vrcB from Aspergillus aculeatus (strain ATCC 16872 / CBS 172.66 / WB 5094).